Consider the following 346-residue polypeptide: Acetyl-coenzyme A carboxylase carboxyl transferase subunit beta (346 aa).

In terms of domain architecture, CoA carboxyltransferase N-terminal spans 24 to 292 (LWIKCPKSGD…LPEVEPIAVA (269 aa)). The span at 300–311 (AEAEAAPDEVVE) shows a compositional bias: acidic residues. Residues 300-346 (AEAEAAPDEVVEVEAPAVDEIVEEKPAATKAKPRSKAKSKAAPKTDE) are disordered. Positions 330–340 (AKPRSKAKSKA) are enriched in basic residues.

Belongs to the AccD/PCCB family. Acetyl-CoA carboxylase is a heterohexamer composed of biotin carboxyl carrier protein (AccB), biotin carboxylase (AccC) and two subunits each of ACCase subunit alpha (AccA) and ACCase subunit beta (AccD).

Its subcellular location is the cytoplasm. The enzyme catalyses N(6)-carboxybiotinyl-L-lysyl-[protein] + acetyl-CoA = N(6)-biotinyl-L-lysyl-[protein] + malonyl-CoA. It functions in the pathway lipid metabolism; malonyl-CoA biosynthesis; malonyl-CoA from acetyl-CoA: step 1/1. Functionally, component of the acetyl coenzyme A carboxylase (ACC) complex. Biotin carboxylase (BC) catalyzes the carboxylation of biotin on its carrier protein (BCCP) and then the CO(2) group is transferred by the transcarboxylase to acetyl-CoA to form malonyl-CoA. This Hirschia baltica (strain ATCC 49814 / DSM 5838 / IFAM 1418) protein is Acetyl-coenzyme A carboxylase carboxyl transferase subunit beta.